Consider the following 161-residue polypeptide: MALNRNKKKKIIKKINNVANKSLSIITANPSKITVNIINKLRKKAKINNIKIYVIRNTLLKKSLKKTIFSKLINIIKGPILVGFSMKHPGSASRLFIKFNKKNINFKILNAIYEKKILNIHEIKDLANLPTHIESITKFVILLKEISLGKFIRVLQNITKK.

Belongs to the universal ribosomal protein uL10 family. Part of the ribosomal stalk of the 50S ribosomal subunit. The N-terminus interacts with L11 and the large rRNA to form the base of the stalk. The C-terminus forms an elongated spine to which L12 dimers bind in a sequential fashion forming a multimeric L10(L12)X complex.

Forms part of the ribosomal stalk, playing a central role in the interaction of the ribosome with GTP-bound translation factors. The chain is Large ribosomal subunit protein uL10 from Buchnera aphidicola subsp. Cinara cedri (strain Cc).